Here is a 213-residue protein sequence, read N- to C-terminus: tRNA (guanine-N(7)-)-methyltransferase (213 aa).

S-adenosyl-L-methionine-binding residues include aspartate 40, glutamate 65, asparagine 92, and aspartate 118. Residue aspartate 118 is part of the active site. 2 residues coordinate substrate: lysine 122 and aspartate 154.

The protein belongs to the class I-like SAM-binding methyltransferase superfamily. TrmB family.

The enzyme catalyses guanosine(46) in tRNA + S-adenosyl-L-methionine = N(7)-methylguanosine(46) in tRNA + S-adenosyl-L-homocysteine. The protein operates within tRNA modification; N(7)-methylguanine-tRNA biosynthesis. Functionally, catalyzes the formation of N(7)-methylguanine at position 46 (m7G46) in tRNA. The sequence is that of tRNA (guanine-N(7)-)-methyltransferase from Synechococcus elongatus (strain ATCC 33912 / PCC 7942 / FACHB-805) (Anacystis nidulans R2).